Here is a 384-residue protein sequence, read N- to C-terminus: Cytochrome b (384 aa).

4 helical membrane-spanning segments follow: residues 32-52 (FGFL…FLAI), 76-98 (WLLR…IHIS), 113-133 (TWVV…MGYV), and 179-199 (FFSF…VHMA). Histidine 82 and histidine 96 together coordinate heme b. 2 residues coordinate heme b: histidine 183 and histidine 197. Histidine 202 is an a ubiquinone binding site. Helical transmembrane passes span 225-245 (FIIK…LFVY), 289-309 (LGGV…PWIT), 321-341 (LYKK…WIGG), and 348-368 (YVVI…IFIP).

The protein belongs to the cytochrome b family. The main subunits of complex b-c1 are: cytochrome b, cytochrome c1 and the Rieske protein. Heme b serves as cofactor.

It is found in the mitochondrion inner membrane. In terms of biological role, component of the ubiquinol-cytochrome c reductase complex (complex III or cytochrome b-c1 complex) that is part of the mitochondrial respiratory chain. The b-c1 complex mediates electron transfer from ubiquinol to cytochrome c. Contributes to the generation of a proton gradient across the mitochondrial membrane that is then used for ATP synthesis. The chain is Cytochrome b (MT-CYB) from Cyanidium caldarium (Red alga).